We begin with the raw amino-acid sequence, 70 residues long: NAD(P)H-quinone oxidoreductase subunit O (70 aa).

This sequence belongs to the complex I NdhO subunit family. As to quaternary structure, NDH-1 can be composed of about 15 different subunits; different subcomplexes with different compositions have been identified which probably have different functions.

It localises to the cellular thylakoid membrane. The enzyme catalyses a plastoquinone + NADH + (n+1) H(+)(in) = a plastoquinol + NAD(+) + n H(+)(out). The catalysed reaction is a plastoquinone + NADPH + (n+1) H(+)(in) = a plastoquinol + NADP(+) + n H(+)(out). Functionally, NDH-1 shuttles electrons from an unknown electron donor, via FMN and iron-sulfur (Fe-S) centers, to quinones in the respiratory and/or the photosynthetic chain. The immediate electron acceptor for the enzyme in this species is believed to be plastoquinone. Couples the redox reaction to proton translocation, and thus conserves the redox energy in a proton gradient. Cyanobacterial NDH-1 also plays a role in inorganic carbon-concentration. The protein is NAD(P)H-quinone oxidoreductase subunit O of Trichormus variabilis (strain ATCC 29413 / PCC 7937) (Anabaena variabilis).